The chain runs to 267 residues: Short chain dehydrogenase claC (267 aa).

Positions 27, 73, 100, and 133 each coordinate NADP(+). Active-site proton donor residues include Ser149 and Ser150. NADP(+) is bound by residues Tyr164, Lys168, and Thr199. The active-site Proton acceptor is the Tyr164. Residue Lys168 is the Lowers pKa of active site Tyr of the active site.

The protein belongs to the short-chain dehydrogenases/reductases (SDR) family.

It functions in the pathway pigment biosynthesis. In terms of biological role, non-reducing polyketide synthase; part of the gene cluster that mediates the biosynthesis of the bianthraquinone cladofulvin, a conidial pigment not required for virulence but that plays a role in fitness and resistance to environmental stresses including UV light and low-temperature stress. The pathway begins with the synthesis of atrochrysone thioester by the polyketide synthase (PKS) claG. The atrochrysone carboxyl ACP thioesterase claF then breaks the thioester bond and releases the atrochrysone carboxylic acid from claG. This compound is decarboxylated by claH to yield emodin, which is further converted to chrysophanol hydroquinone by the reductase claC and the dehydratase claB. The cytochrome monooxygenase P450 claM then catalyzes the dimerization of nataloe-emodin to cladofulvin. This Passalora fulva (Tomato leaf mold) protein is Short chain dehydrogenase claC.